Here is a 401-residue protein sequence, read N- to C-terminus: MTYNQPNNQGFYGQFGGQFVPETLMTAVKELEVAYEDSKKDPVFQAELKELLKDYVGRENPLYFAKRLTEYAGGAKIYLKREDLNHTGAHKINNALGQVLLAKKMGKNKVIAETGAGQHGVATATAAALFGMECTIYMGEEDVKRQSLNVFRMELLGAKVHSVTDGSRVLKDAVNAALRAWVAQVEDTHYVMGSVLGPHPFPQIVRDYQAIIGQEARAQFLEKENKLPDALVACVGGGSNSMGLFYPFVNDESVEMYGVEAAGLGIDTPHHAATITKGRPGVLHGTLMDVLQDENGQILEAFSISAGLDYPGIGPEHSYFNAVGRAKYVDITDEEALEGFKILSRTEGIIPALESSHAIAYAVKLAKELGSEKTMIVCLSGRGDKDVVQVKERLEAEKEVK.

Position 91 is an N6-(pyridoxal phosphate)lysine (Lys-91).

The protein belongs to the TrpB family. Tetramer of two alpha and two beta chains. Pyridoxal 5'-phosphate is required as a cofactor.

The catalysed reaction is (1S,2R)-1-C-(indol-3-yl)glycerol 3-phosphate + L-serine = D-glyceraldehyde 3-phosphate + L-tryptophan + H2O. Its pathway is amino-acid biosynthesis; L-tryptophan biosynthesis; L-tryptophan from chorismate: step 5/5. Its function is as follows. The beta subunit is responsible for the synthesis of L-tryptophan from indole and L-serine. This is Tryptophan synthase beta chain from Lactococcus lactis subsp. cremoris (strain MG1363).